We begin with the raw amino-acid sequence, 2617 residues long: Non-reducing polyketide synthase epaA (2617 aa).

The tract at residues 95 to 231 (PNILLSPMVV…AARSISSLQQ (137 aa)) is N-terminal acylcarrier protein transacylase domain (SAT). The Nucleophile; for transacylase activity role is filled by Cys132. Catalysis depends on His250, which acts as the Proton donor/acceptor; for transacylase activity. The region spanning 372–790 (PNEIAVIGMS…GSNASMVVAQ (419 aa)) is the Ketosynthase family 3 (KS3) domain. Residues Cys539, His674, and His713 each act as for beta-ketoacyl synthase activity in the active site. Positions 902 to 1193 (FGGQISNYVG…ITSMASRALG (292 aa)) are malonyl-CoA:ACP transacylase (MAT) domain. Residues 1282–1413 (PKTLWSLIEA…GKLAFLSGQD (132 aa)) are N-terminal hotdog fold. The 310-residue stretch at 1282 to 1591 (PKTLWSLIEA…YHKVAKASMS (310 aa)) folds into the PKS/mFAS DH domain. Residues 1310 to 1589 (LVSGHVIANT…INYHKVAKAS (280 aa)) are product template (PT) domain. The active-site Proton acceptor; for dehydratase activity is the His1314. Residues 1443-1591 (ADDIIQGRNI…YHKVAKASMS (149 aa)) form a C-terminal hotdog fold region. Asp1499 functions as the Proton donor; for dehydratase activity in the catalytic mechanism. The interval 1600 to 1651 (TEAAPSSSTRAHPTSSSSPRLPGPSVPEDKSQNETQPAGTNAVAKKKSEKSA) is disordered. The segment covering 1602–1619 (AAPSSSTRAHPTSSSSPR) has biased composition (low complexity). Positions 1653–1727 (QNVLEKTRAL…GLVEYVQSAV (75 aa)) constitute a Carrier domain. O-(pantetheine 4'-phosphoryl)serine is present on Ser1687. Residues 1728 to 1799 (GVPTNGDEPD…PAMPPASSKT (72 aa)) form a disordered region. The segment covering 1750–1766 (LAPSPSSSSSSTNLTED) has biased composition (low complexity). Polar residues predominate over residues 1769 to 1785 (LDQAETTTNISSYPGQT). A methyltransferase domain region spans residues 1970–2158 (DSLLNKLSYR…VGYGQVDWTD (189 aa)). Residues 2240-2485 (ITGATGSLGV…LCWTPVNDVA (246 aa)) are NADPH-binding (R) domain.

The cofactor is pantetheine 4'-phosphate.

It functions in the pathway secondary metabolite biosynthesis. Its function is as follows. Non-reducing polyketide synthase; part of the gene cluster that mediates the biosynthesis of nigerpyrone and its derivatives carbonarone A and pestalamide A. The biosynthesis pathway begins with the polyketide assembly by epaA to form phenylacetyl triketide precursor from successive condensation of two malonyl-CoA, presumably with one phenylacetyl-CoA starter unit produced by the phenylacetyl-CoA ligase epaB. For the nigerpyrone biosynthesis, the reactive polyketide chain is released as an aldehyde through the R-domain. A nonenzymatic cyclization and dehydration may create nigerpyrone. For the biosynthesis of carbonarone A and pestalamide A, an extra methyl group is added through the C-methyltransferase domain. Several further steps involving the dehydrogenase orf1, the cytochrome P450 monooxygenase orf2 and the FAD-dependent monooxygenase orf3 are required to form a carbonarone A precursor which is converted to carbonarone A via cyclization. The O-acetyltransferase epaC could catalyze the transfer of 2-methylsuccinyl-CoA, a common intermediate in the ethylmalonyl-CoA pathway, to generate the final product pestalamide A. The sequence is that of Non-reducing polyketide synthase epaA from Aspergillus niger (strain ATCC MYA-4892 / CBS 513.88 / FGSC A1513).